A 239-amino-acid chain; its full sequence is Myogenic factor 6 (239 aa).

The tract at residues P28 to E59 is disordered. Residues D92–L143 enclose the bHLH domain. Positions C182–M196 are enriched in polar residues. Positions C182–K239 are disordered. A compositionally biased stretch (low complexity) spans V204–I223.

In terms of assembly, efficient DNA binding requires dimerization with another bHLH protein.

The protein resides in the nucleus. Functionally, involved in muscle differentiation (myogenic factor). Induces fibroblasts to differentiate into myoblasts. Probable sequence specific DNA-binding protein. This is Myogenic factor 6 (myf6) from Danio rerio (Zebrafish).